A 113-amino-acid chain; its full sequence is Ribonuclease P protein component (113 aa).

It belongs to the RnpA family. In terms of assembly, consists of a catalytic RNA component (M1 or rnpB) and a protein subunit.

It catalyses the reaction Endonucleolytic cleavage of RNA, removing 5'-extranucleotides from tRNA precursor.. Functionally, RNaseP catalyzes the removal of the 5'-leader sequence from pre-tRNA to produce the mature 5'-terminus. It can also cleave other RNA substrates such as 4.5S RNA. The protein component plays an auxiliary but essential role in vivo by binding to the 5'-leader sequence and broadening the substrate specificity of the ribozyme. This Desulforamulus reducens (strain ATCC BAA-1160 / DSM 100696 / MI-1) (Desulfotomaculum reducens) protein is Ribonuclease P protein component.